A 227-amino-acid polypeptide reads, in one-letter code: UPF0173 metal-dependent hydrolase Bsph_4138 (227 aa).

The protein belongs to the UPF0173 family.

The sequence is that of UPF0173 metal-dependent hydrolase Bsph_4138 from Lysinibacillus sphaericus (strain C3-41).